Here is a 310-residue protein sequence, read N- to C-terminus: Coproporphyrin III ferrochelatase (310 aa).

A Fe-coproporphyrin III-binding site is contributed by Y13. Residue Y13 participates in N-methylmesoporphyrin binding. A Mg(2+)-binding site is contributed by E20. A Fe-coproporphyrin III-binding site is contributed by R30. 31 to 33 contacts N-methylmesoporphyrin; the sequence is RGR. Mg(2+) is bound at residue R46. Residues 46 to 47, S54, and Y125 contribute to the Fe-coproporphyrin III site; that span reads RY. N-methylmesoporphyrin is bound by residues H183 and K188. A Fe(2+)-binding site is contributed by H183. E264 serves as a coordination point for Fe(2+). Mg(2+) is bound by residues D268 and E272.

It belongs to the ferrochelatase family. In terms of assembly, monomer. Interacts with frataxin/Fra.

Its subcellular location is the cytoplasm. The enzyme catalyses Fe-coproporphyrin III + 2 H(+) = coproporphyrin III + Fe(2+). It functions in the pathway porphyrin-containing compound metabolism; protoheme biosynthesis. With respect to regulation, stimulated by Mg(2+). Inhibited by Cd(2+). Inhibited by N-methylmesoporphyrin (N-MeMP) and 2,4-disulfonic acid deuteroporphyrin IX (dSDP). Involved in coproporphyrin-dependent heme b biosynthesis. Catalyzes the insertion of ferrous iron into coproporphyrin III to form Fe-coproporphyrin III. It can also insert iron into protoporphyrin IX. Has weaker activity with 2,4 disulfonate, deuteroporphyrin and 2,4 hydroxyethyl. In vitro, can also use Zn(2+) or Cu(2+). This Bacillus subtilis (strain 168) protein is Coproporphyrin III ferrochelatase.